The primary structure comprises 193 residues: Peptidyl-tRNA hydrolase (193 aa).

Y14 is a binding site for tRNA. H19 acts as the Proton acceptor in catalysis. Residues F64, N66, and N112 each contribute to the tRNA site.

This sequence belongs to the PTH family. Monomer.

It localises to the cytoplasm. It catalyses the reaction an N-acyl-L-alpha-aminoacyl-tRNA + H2O = an N-acyl-L-amino acid + a tRNA + H(+). Its function is as follows. Hydrolyzes ribosome-free peptidyl-tRNAs (with 1 or more amino acids incorporated), which drop off the ribosome during protein synthesis, or as a result of ribosome stalling. In terms of biological role, catalyzes the release of premature peptidyl moieties from peptidyl-tRNA molecules trapped in stalled 50S ribosomal subunits, and thus maintains levels of free tRNAs and 50S ribosomes. The sequence is that of Peptidyl-tRNA hydrolase from Bartonella henselae (strain ATCC 49882 / DSM 28221 / CCUG 30454 / Houston 1) (Rochalimaea henselae).